The following is a 555-amino-acid chain: E3 ubiquitin-protein ligase ARIH1 (555 aa).

A compositionally biased stretch (acidic residues) spans 1–47; the sequence is MDSDEGYNYEFDEDEECSEEDSGAEEEEDEDDDEPDDDNLDLGEVEL. Positions 1–93 are disordered; the sequence is MDSDEGYNYE…GGGGGPGHEQ (93 aa). A compositionally biased stretch (gly residues) spans 65–90; the sequence is ETGGGGGSALGPGGGGGGGGGGGGPG. Residues 103–151 form a UBA-like region; sequence TAEQILQHMVECIREVNEVIQNPATITRILLSHFNWDKEKLMERYFDGN. Residue Lys-140 is modified to N6-acetyllysine. The interval 180 to 391 is TRIAD supradomain; sequence QDMPCQICYL…SAWYNCNRYN (212 aa). Zn(2+) contacts are provided by Cys-184, Cys-187, Cys-201, His-203, Cys-206, Cys-209, Cys-229, Cys-234, Cys-274, Cys-279, Cys-295, Cys-297, Cys-302, Cys-305, His-310, Cys-315, Cys-342, and Cys-345. Residues 184 to 234 form an RING-type 1 zinc finger; it reads CQICYLNYPNSYFTGLECGHKFCMQCWSEYLTTKIMEEGMGQTISCPAHGC. The IBR-type zinc-finger motif lies at 254–315; sequence LKYQHLITNS…GENWHDPVKC (62 aa). The segment at 342–373 adopts an RING-type 2; atypical zinc-finger fold; that stretch reads CPKCHVTIEKDGGCNHMVCRNQNCKAEFCWVC. Cys-355 is a catalytic residue. 6 residues coordinate Zn(2+): Cys-360, Cys-365, Cys-370, Cys-373, His-380, and Cys-387. The interval 406–555 is ariadne domain; the sequence is RAALQRYLFY…EKDLWEYIED (150 aa).

It belongs to the RBR family. Ariadne subfamily. As to quaternary structure, interacts (via the first RING-type zinc finger) with UBE2L3. Associates with cullin-RING ubiquitin ligase (CRL) complexes containing CUL1, CUL2 and CUL3. Interacts with neddylated CUL1. Interacts with neddylated CUL2. Interacts with neddylated CUL3. Interacts with neddylated CUL4A.

The protein resides in the cytoplasm. The protein localises to the nucleus. It localises to the cajal body. The catalysed reaction is [E2 ubiquitin-conjugating enzyme]-S-ubiquitinyl-L-cysteine + [acceptor protein]-L-lysine = [E2 ubiquitin-conjugating enzyme]-L-cysteine + [acceptor protein]-N(6)-ubiquitinyl-L-lysine.. The protein operates within protein modification; protein ubiquitination. Its activity is regulated as follows. Autoinhibited by the ariadne domain, which masks the second RING-type zinc finger that contains the active site and inhibits the E3 activity. Inhibition is relieved upon binding to neddylated cullin-RING ubiquitin ligase complexes, which activate the E3 ligase activity of ARIH1. Functionally, E3 ubiquitin-protein ligase, which catalyzes ubiquitination of target proteins together with ubiquitin-conjugating enzyme E2 UBE2L3. Acts as an atypical E3 ubiquitin-protein ligase by working together with cullin-RING ubiquitin ligase (CRL) complexes and initiating ubiquitination of CRL substrates: associates with CRL complexes and specifically mediates addition of the first ubiquitin on CRLs targets. The initial ubiquitin is then elongated by CDC34/UBE2R1 and UBE2R2. E3 ubiquitin-protein ligase activity is activated upon binding to neddylated cullin-RING ubiquitin ligase complexes. Plays a role in protein translation in response to DNA damage by mediating ubiquitination of EIF4E2, the consequences of EIF4E2 ubiquitination are however unclear. According to a report, EIF4E2 ubiquitination leads to promote EIF4E2 cap-binding and protein translation arrest. According to another report EIF4E2 ubiquitination leads to its subsequent degradation. Acts as the ligase involved in ISGylation of EIF4E2. In vitro, controls the degradation of the LINC (LInker of Nucleoskeleton and Cytoskeleton) complex member SUN2 and may therefore have a role in the formation and localization of the LINC complex, and as a consequence, may act in nuclear subcellular localization and nuclear morphology. This is E3 ubiquitin-protein ligase ARIH1 (ARIH1) from Bos taurus (Bovine).